The chain runs to 360 residues: MDSSNCKVNAPLLSQRHRRMVTKDGHSTLQMDGAQRGLVYLRDAWGILMDMRWRWMMLVFSASFVVHWLVFAVLWYAVAEMNGDLEIDHDVPPENHTICVKHITSFTAAFSFSLETQLTIGYGTMFPSGDCPSAIALLAIQMLLGLMLEAFITGAFVAKIARPKNRAFSIRFTDLAVVAHKDGKPNLIFQVANTRPSPLTNVRVSAVLYQERENGELYQTSVDFHLDGISSEECPFFIFPLTYYHTISPSSPLATLLQHETPPHFELVVFLSAMQEGTGEICQRRTSYLPSEIMLHHRFAALMTRGSKGEYQVKMENFDKTVPEHPTPVVSKSPHRTDLDIHINGQSIDNFQIAETGLTE.

The Cytoplasmic portion of the chain corresponds to 1 to 50 (MDSSNCKVNAPLLSQRHRRMVTKDGHSTLQMDGAQRGLVYLRDAWGILMD). The helical transmembrane segment at 51–77 (MRWRWMMLVFSASFVVHWLVFAVLWYA) threads the bilayer. The Extracellular portion of the chain corresponds to 78 to 105 (VAEMNGDLEIDHDVPPENHTICVKHITS). Positions 106–122 (FTAAFSFSLETQLTIGY) form an intramembrane region, helical; Pore-forming. The Selectivity filter motif lies at 119–124 (TIGYGT). Residues 123–131 (GTMFPSGDC) lie on the Extracellular side of the membrane. Residues 132–157 (PSAIALLAIQMLLGLMLEAFITGAFV) form a helical membrane-spanning segment. The Cytoplasmic segment spans residues 158–360 (AKIARPKNRA…FQIAETGLTE (203 aa)). Ser-287 bears the Phosphoserine; by PKA mark.

Belongs to the inward rectifier-type potassium channel (TC 1.A.2.1) family. KCNJ13 subfamily. In terms of assembly, homotetramer. Interacts with RAB28; the interaction may facilitate cone outer segments phagocytosis. Phosphorylation at Ser-287 by PKA increases ionic currents. Expressed in retina.

The protein resides in the membrane. The protein localises to the cell membrane. The catalysed reaction is K(+)(in) = K(+)(out). Inhibited by Ba(2+) and Cs(+), although sensitivity to those inhibitors is much lower than in other Kir channels. Its function is as follows. Inward rectifier potassium channels are characterized by a greater tendency to allow potassium to flow into the cell rather than out of it. Their voltage dependence is regulated by the concentration of extracellular potassium; as external potassium is raised, the voltage range of the channel opening shifts to more positive voltages. The inward rectification is mainly due to the blockage of outward current by internal magnesium. KCNJ13 has a very low single channel conductance, low sensitivity to block by external barium and cesium, and no dependence of its inward rectification properties on the internal blocking particle magnesium. This is Inward rectifier potassium channel 13 from Mus musculus (Mouse).